The chain runs to 1925 residues: Plexin-D1 (1925 aa).

Low complexity predominate over residues 1 to 18; the sequence is MAPRAAGGAPLSARAAAA. Residues 1-23 form a disordered region; it reads MAPRAAGGAPLSARAAAASPPPF. Positions 1-46 are cleaved as a signal peptide; it reads MAPRAAGGAPLSARAAAASPPPFQTPPRCPVPLLLLLLLGAARAGA. Positions 47–546 constitute a Sema domain; that stretch reads LEIQRRFPSP…TSHQMARVKV (500 aa). The Extracellular segment spans residues 47–1271; it reads LEIQRRFPSP…TLQLGGSETA (1225 aa). The N-linked (GlcNAc...) asparagine glycan is linked to Asn86. 2 disulfide bridges follow: Cys104/Cys114 and Cys140/Cys148. N-linked (GlcNAc...) asparagine glycans are attached at residues Asn155, Asn188, and Asn224. 2 disulfides stabilise this stretch: Cys322/Cys445 and Cys345/Cys389. N-linked (GlcNAc...) asparagine glycans are attached at residues Asn481 and Asn500. Intrachain disulfides connect Cys549–Cys566, Cys555–Cys600, Cys558–Cys575, Cys569–Cys581, and Cys637–Cys661. Residue Asn583 is glycosylated (N-linked (GlcNAc...) asparagine). N-linked (GlcNAc...) asparagine glycosylation is found at Asn696, Asn736, Asn802, Asn965, Asn1017, Asn1060, Asn1099, Asn1118, Asn1132, Asn1237, and Asn1257. 3 consecutive IPT/TIG domains span residues 891–979, 981–1066, and 1069–1160; these read PEIH…FSYV, PLVH…FWYM, and PVIT…LDPE. Residues 1272–1292 form a helical membrane-spanning segment; it reads IIVSIVICSVLLLLSVVALFV. At 1293 to 1925 the chain is on the cytoplasmic side; the sequence is FCTKSRRAER…DNIYECYSEA (633 aa).

Belongs to the plexin family. As to quaternary structure, interacts with NRP1 and SEMA4A. Interacts with SH3BP1; they dissociate upon SEMA3E binding to PLXND1 allowing SH3BP1 to transduce downstream signal through RAC1 inactivation. In terms of tissue distribution, detected at low levels in heart, placenta, lung, skeletal muscle, kidney, thymus and liver. Detected at very low levels in brain, colon, spleen, small intestine and peripheral blood leukocytes.

Its subcellular location is the cell membrane. It is found in the cell projection. The protein resides in the lamellipodium membrane. In terms of biological role, cell surface receptor for SEMA4A and for class 3 semaphorins, such as SEMA3A, SEMA3C and SEMA3E. Plays an important role in cell-cell signaling, and in regulating the migration of a wide spectrum of cell types. Regulates the migration of thymocytes in the medulla. Regulates endothelial cell migration. Plays an important role in ensuring the specificity of synapse formation. Required for normal development of the heart and vasculature. Mediates anti-angiogenic signaling in response to SEMA3E. The polypeptide is Plexin-D1 (PLXND1) (Homo sapiens (Human)).